Reading from the N-terminus, the 338-residue chain is Large ribosomal subunit protein uL10 (338 aa).

A disordered region spans residues 295 to 338 (EVPTIQPTTPPEKKEEEEKKEEEEEEAETVSEEELAEGLGALFG). Residues 312–330 (EKKEEEEEEAETVSEEELA) show a composition bias toward acidic residues.

This sequence belongs to the universal ribosomal protein uL10 family. In terms of assembly, part of the 50S ribosomal subunit. Forms part of the ribosomal stalk which helps the ribosome interact with GTP-bound translation factors. Forms a heptameric L10(L12)2(L12)2(L12)2 complex, where L10 forms an elongated spine to which the L12 dimers bind in a sequential fashion.

Functionally, forms part of the ribosomal stalk, playing a central role in the interaction of the ribosome with GTP-bound translation factors. The sequence is that of Large ribosomal subunit protein uL10 from Staphylothermus marinus (strain ATCC 43588 / DSM 3639 / JCM 9404 / F1).